The primary structure comprises 420 residues: Cytochrome P-450 monooxygenase DoxA (420 aa).

Cys-367 lines the heme pocket.

This sequence belongs to the cytochrome P450 family. In terms of assembly, monomer. Heme is required as a cofactor.

Its subcellular location is the cytoplasm. It catalyses the reaction 13-deoxydaunorubicin + NADPH + O2 + H(+) = 13-dihydrodaunorubicin + NADP(+) + H2O. The catalysed reaction is 13-dihydrodaunorubicin + NADPH + O2 + H(+) = daunorubicin + NADP(+) + 2 H2O. It carries out the reaction 13-deoxycarminomycin + NADPH + O2 + H(+) = 13-dihydrocarminomycin + NADP(+) + H2O. The enzyme catalyses 13-dihydrocarminomycin + NADPH + O2 + H(+) = carminomycin + NADP(+) + 2 H2O. It catalyses the reaction daunorubicin + NADPH + O2 + H(+) = doxorubicin + NADP(+) + H2O. Its pathway is antibiotic biosynthesis; daunorubicin biosynthesis. It functions in the pathway antibiotic biosynthesis; carminomycin biosynthesis. It participates in antibiotic biosynthesis; doxorubicin biosynthesis. Functionally, involved in the biosynthesis of the anthracyclines carminomycin, daunorubicin (daunomycin) and doxorubicin (adriamycin) which are aromatic polyketide antibiotics that exhibit high cytotoxicity and are widely applied in the chemotherapy of a variety of cancers. In vivo, DoxA catalyzes the C-13 hydroxylation of 13-deoxycarminomycin and 13-deoxydaunorubicin to yield 13-dihydrocarminomycin and 13-dihydrodaunorubicin, respectively, as well as the oxidation of these 13-dihydro-anthracyclines to their respective 13-keto forms, carminomycin and daunorubicin. In vivo, it also catalyzes the C-14 hydroxylation of daunorubicin to form doxorubicin. It can only use NADP. DoxA acts jointly with DnrV. The sequence is that of Cytochrome P-450 monooxygenase DoxA (doxA) from Streptomyces peucetius subsp. caesius.